We begin with the raw amino-acid sequence, 323 residues long: MQRLVPTLRRDGVNPELIPVIRTLLAATKEIAFRVRQGALSGVLGSTLDENIQGETQKQLDVIANQLIKDLLLEEPQVRAIASEEEDTVVAGNPKGAYTVAFDPLDGSSNIDINGQIGTIFTIYPARDDVPADSEAQFQQPGHQQVCAGYVLYGPSTILVMTTGGPTRGYTLDATHGSYLLTQAQLSVPLNTQEFALNMANQRFWSAPFQRYVQDLLLGETGPRAKRFNMRWNAAMVGDVHRVLTRGGIFMYPSDNRNPRQPAKLRLLYEANPMAMLTENAGGKAWSENQRILNIQPDSLHQRVAVILGSANEVDVCMSYLLE.

Glu84, Asp103, Leu105, and Asp106 together coordinate Mg(2+). Residues 106–109, Asn198, and Lys264 each bind substrate; that span reads DGSS. Glu270 serves as a coordination point for Mg(2+).

Belongs to the FBPase class 1 family. Homotetramer. Mg(2+) is required as a cofactor.

It is found in the cytoplasm. It catalyses the reaction beta-D-fructose 1,6-bisphosphate + H2O = beta-D-fructose 6-phosphate + phosphate. It participates in carbohydrate biosynthesis; gluconeogenesis. This is Fructose-1,6-bisphosphatase class 1 from Cellvibrio japonicus (strain Ueda107) (Pseudomonas fluorescens subsp. cellulosa).